A 92-amino-acid chain; its full sequence is Small ribosomal subunit protein uS19 (92 aa).

This sequence belongs to the universal ribosomal protein uS19 family.

Protein S19 forms a complex with S13 that binds strongly to the 16S ribosomal RNA. The protein is Small ribosomal subunit protein uS19 of Neisseria meningitidis serogroup C (strain 053442).